Here is a 298-residue protein sequence, read N- to C-terminus: 4-diphosphocytidyl-2-C-methyl-D-erythritol kinase (298 aa).

The active site involves Lys11. Residue 94-104 (PMGGGLGGGSS) coordinates ATP. The active site involves Asp136.

This sequence belongs to the GHMP kinase family. IspE subfamily.

It catalyses the reaction 4-CDP-2-C-methyl-D-erythritol + ATP = 4-CDP-2-C-methyl-D-erythritol 2-phosphate + ADP + H(+). It functions in the pathway isoprenoid biosynthesis; isopentenyl diphosphate biosynthesis via DXP pathway; isopentenyl diphosphate from 1-deoxy-D-xylulose 5-phosphate: step 3/6. Catalyzes the phosphorylation of the position 2 hydroxy group of 4-diphosphocytidyl-2C-methyl-D-erythritol. The sequence is that of 4-diphosphocytidyl-2-C-methyl-D-erythritol kinase from Chromohalobacter salexigens (strain ATCC BAA-138 / DSM 3043 / CIP 106854 / NCIMB 13768 / 1H11).